Reading from the N-terminus, the 145-residue chain is Basic phospholipase A2 PC16 (145 aa).

The N-terminal stretch at 1 to 21 (MYPAHLLLLLAVCVSLLGASA) is a signal peptide. The propeptide occupies 22–27 (IPPLPL). 7 cysteine pairs are disulfide-bonded: cysteine 38–cysteine 98, cysteine 54–cysteine 144, cysteine 56–cysteine 72, cysteine 71–cysteine 125, cysteine 78–cysteine 118, cysteine 87–cysteine 111, and cysteine 105–cysteine 116. Ca(2+) is bound by residues tyrosine 55, glycine 57, and glycine 59. Histidine 75 is a catalytic residue. Residue aspartate 76 coordinates Ca(2+). Residue aspartate 119 is part of the active site.

This sequence belongs to the phospholipase A2 family. Group I subfamily. D49 sub-subfamily. Ca(2+) is required as a cofactor.

Its subcellular location is the secreted. The catalysed reaction is a 1,2-diacyl-sn-glycero-3-phosphocholine + H2O = a 1-acyl-sn-glycero-3-phosphocholine + a fatty acid + H(+). Functionally, PLA2 catalyzes the calcium-dependent hydrolysis of the 2-acyl groups in 3-sn-phosphoglycerides. The chain is Basic phospholipase A2 PC16 from Laticauda laticaudata (Blue-ringed sea krait).